The chain runs to 467 residues: MSNTFEESLKSMSLDYLNLLINGQAFSDVTFSVEGRLVHAHRCILAARSLFFRKFFCESDPSQPGAEPANQTGSGARAAAVGGVIPVNSVGYEVFLLLLQFLYSGQVSIVPHKHEPRSNCGDRGCWHTHCTAAVDLSLDILAAARYFGVEQLALLTQKHLTSMVEKASIEDVMKVLIASRKQDMHQLWTTCSYLIAKSGLPQEILAKHLPIELVAKIEELRLKSSMPLRSLMPHHHDLTSTLDLEDQKIRRMRRALDSSDVELVKLMVMGEGLNLDESLALIYAVENCSREVVKALLELGAADVNYPAGPTGKTALHIAAEMVSPDMVAVLLDHHADPNVQTVDGITPLDILRTLTSDFLFKGAIPGLTHIEPNKLRLCLELVQSAALVISREEGNNNSNDNNTMIYPRMKDEHTSGSSLDSRLVYLNLGATNRDIGDDNSNQREGMNLHHHHHDPSTMYHHHHHHF.

A BTB domain is found at 27 to 111; the sequence is SDVTFSVEGR…LYSGQVSIVP (85 aa). Residues 117–131 form a C2HC NPR-type zinc finger; that stretch reads RSNCGDRGCWHTHCT. Residues Cys120, Cys125, His127, and Cys130 each coordinate Zn(2+). ANK repeat units lie at residues 247–276, 277–306, 311–340, and 344–378; these read QKIRRMRRALDSSDVELVKLMVMGEGLNLD, ESLALIYAVENCSREVVKALLELGAADVNY, TGKTALHIAAEMVSPDMVAVLLDHHADPNV, and DGITPLDILRTLTSDFLFKGAIPGLTHIEPNKLRL. The segment at 434 to 467 is disordered; it reads RDIGDDNSNQREGMNLHHHHHDPSTMYHHHHHHF. Basic residues predominate over residues 449 to 467; the sequence is LHHHHHDPSTMYHHHHHHF.

It belongs to the plant 'ANKYRIN-BTB/POZ' family. 'NOOT-BOP-COCH-like' (NBCL) subfamily. In terms of assembly, homodimer or heterodimer with BOP2. Interacts with PAN.

It is found in the cytoplasm. The protein resides in the nucleus. It participates in protein modification; protein ubiquitination. May act as a substrate-specific adapter of an E3 ubiquitin-protein ligase complex (CUL3-RBX1-BTB) which mediates the ubiquitination and subsequent proteasomal degradation of target proteins. Acts redundantly with BOP2. BOP1/2 promote leaf and floral meristem fate and determinacy in a pathway targeting AP1 and AGL24. BOP1/2 act as transcriptional co-regulators through direct interaction with TGA factors, including PAN, a direct regulator of AP1. Controls lateral organ fate through positive regulation of adaxial-abaxial polarity genes ATHB-14/PHB, YAB1/FIL and YAB3, and through positive regulation of LOB domain-containing genes LOB, LBD6/AS2 and LBD36. Promotes and maintains a developmentally determinate state in leaf cells through the negative regulation of JAG, JGL and class I KNOX genes. Is also involved in nectary development, formation of normal abscission zones (AZs) and suppression of bract formation, probably by regulating the cell wall disorganization. This is Regulatory protein NPR6 from Arabidopsis thaliana (Mouse-ear cress).